The chain runs to 186 residues: Ribosome-recycling factor (186 aa).

This sequence belongs to the RRF family.

Its subcellular location is the cytoplasm. Its function is as follows. Responsible for the release of ribosomes from messenger RNA at the termination of protein biosynthesis. May increase the efficiency of translation by recycling ribosomes from one round of translation to another. The chain is Ribosome-recycling factor from Brucella melitensis biotype 2 (strain ATCC 23457).